Consider the following 545-residue polypeptide: Methionine--tRNA ligase (545 aa).

The 'HIGH' region motif lies at 15–25 (PYANGPIHLGH). Residues Cys-146, Cys-149, Cys-159, and Cys-162 each contribute to the Zn(2+) site. The short motif at 332-336 (KMSKS) is the 'KMSKS' region element. Lys-335 serves as a coordination point for ATP.

This sequence belongs to the class-I aminoacyl-tRNA synthetase family. MetG type 1 subfamily. Monomer. Requires Zn(2+) as cofactor.

Its subcellular location is the cytoplasm. It catalyses the reaction tRNA(Met) + L-methionine + ATP = L-methionyl-tRNA(Met) + AMP + diphosphate. Is required not only for elongation of protein synthesis but also for the initiation of all mRNA translation through initiator tRNA(fMet) aminoacylation. The polypeptide is Methionine--tRNA ligase (Hamiltonella defensa subsp. Acyrthosiphon pisum (strain 5AT)).